The sequence spans 287 residues: Acetylglutamate kinase (287 aa).

Residues 64–65 (GG), R86, and N181 contribute to the substrate site.

Belongs to the acetylglutamate kinase family. ArgB subfamily.

Its subcellular location is the cytoplasm. The catalysed reaction is N-acetyl-L-glutamate + ATP = N-acetyl-L-glutamyl 5-phosphate + ADP. The protein operates within amino-acid biosynthesis; L-arginine biosynthesis; N(2)-acetyl-L-ornithine from L-glutamate: step 2/4. Its function is as follows. Catalyzes the ATP-dependent phosphorylation of N-acetyl-L-glutamate. This is Acetylglutamate kinase from Desulforamulus reducens (strain ATCC BAA-1160 / DSM 100696 / MI-1) (Desulfotomaculum reducens).